The primary structure comprises 568 residues: PWWP domain-containing protein2 (568 aa).

Residues 1–19 are compositionally biased toward basic and acidic residues; sequence MTEIKDSSVKDENPGKQEE. Disordered stretches follow at residues 1–126, 213–340, and 465–568; these read MTEI…YKPG, QSTP…DVAK, and IASL…TGQK. Residues 29–46 are compositionally biased toward polar residues; sequence MSTATNNSKNIETTSSNG. Composition is skewed to basic and acidic residues over residues 48–88 and 100–122; these read EDIK…KTIE and KSQK…ERVN. The PWWP domain maps to 125 to 189; it reads PGMRVLTKMS…SDSLTPLTSE (65 aa). The segment covering 214 to 228 has biased composition (low complexity); sequence STPDLDSLSVPSSES. Acidic residues predominate over residues 229–249; it reads EVSEEESDQEMSEPSPIEEDY. Basic residues predominate over residues 255–266; sequence RRITRKGTKKKT. A compositionally biased stretch (polar residues) spans 281-292; sequence LNASSNVSSNPA. A compositionally biased stretch (acidic residues) spans 325 to 336; it reads KEEEEGSVANEE. Composition is skewed to basic and acidic residues over residues 489–500 and 514–541; these read KQNEDNEDKVKA and DASK…KDFA.

In Schizosaccharomyces pombe (strain 972 / ATCC 24843) (Fission yeast), this protein is PWWP domain-containing protein2 (pdp2).